Here is a 91-residue protein sequence, read N- to C-terminus: Gene 76 protein (91 aa).

A disordered region spans residues 58–81; sequence ELPSCDESPKGEARRDNDNRDGGK.

The chain is Gene 76 protein (76) from Mycobacterium phage L5 (Mycobacteriophage L5).